Consider the following 469-residue polypeptide: tRNA modification GTPase MnmE (469 aa).

(6S)-5-formyl-5,6,7,8-tetrahydrofolate-binding residues include Arg38, Glu95, and Arg134. The region spanning 230-392 (GIRVALVGPP…LRRGLAALVD (163 aa)) is the TrmE-type G domain. Residues 240–245 (NAGKSS), 259–265 (SAQAGTT), and 284–287 (DTAG) contribute to the GTP site. 2 residues coordinate Mg(2+): Ser244 and Thr265. Lys468 contributes to the (6S)-5-formyl-5,6,7,8-tetrahydrofolate binding site.

This sequence belongs to the TRAFAC class TrmE-Era-EngA-EngB-Septin-like GTPase superfamily. TrmE GTPase family. Homodimer. Heterotetramer of two MnmE and two MnmG subunits. K(+) is required as a cofactor.

It localises to the cytoplasm. In terms of biological role, exhibits a very high intrinsic GTPase hydrolysis rate. Involved in the addition of a carboxymethylaminomethyl (cmnm) group at the wobble position (U34) of certain tRNAs, forming tRNA-cmnm(5)s(2)U34. The protein is tRNA modification GTPase MnmE of Halorhodospira halophila (strain DSM 244 / SL1) (Ectothiorhodospira halophila (strain DSM 244 / SL1)).